The chain runs to 183 residues: Ribosome maturation factor RimM (183 aa).

Positions 103 to 183 constitute a PRC barrel domain; that stretch reads EEGDYYWKDL…SIEVDWDPGF (81 aa).

It belongs to the RimM family. Binds ribosomal protein uS19.

The protein resides in the cytoplasm. In terms of biological role, an accessory protein needed during the final step in the assembly of 30S ribosomal subunit, possibly for assembly of the head region. Essential for efficient processing of 16S rRNA. May be needed both before and after RbfA during the maturation of 16S rRNA. It has affinity for free ribosomal 30S subunits but not for 70S ribosomes. The sequence is that of Ribosome maturation factor RimM from Escherichia coli O157:H7 (strain EC4115 / EHEC).